The primary structure comprises 130 residues: Small ribosomal subunit protein uS9 (130 aa).

Residues 109–130 form a disordered region; it reads RMKERKKYGLKGARRAPQFSKR. The segment covering 111 to 130 has biased composition (basic residues); the sequence is KERKKYGLKGARRAPQFSKR.

This sequence belongs to the universal ribosomal protein uS9 family.

In Listeria innocua serovar 6a (strain ATCC BAA-680 / CLIP 11262), this protein is Small ribosomal subunit protein uS9.